A 349-amino-acid polypeptide reads, in one-letter code: ATPase GET3 (349 aa).

Residue 26–33 (KGGVGKTT) coordinates ATP. Aspartate 57 is an active-site residue. Glutamate 242 and asparagine 269 together coordinate ATP. Zn(2+) contacts are provided by cysteine 281 and cysteine 284.

Belongs to the arsA ATPase family. In terms of assembly, homodimer. Component of the Golgi to ER traffic (GET) complex, which is composed of GET1, GET2 and GET3. Within the complex, GET1 and GET2 form a heterotetramer which is stabilized by phosphatidylinositol binding and which binds to the GET3 homodimer. Interacts with the chloride channel protein GEF1.

Its subcellular location is the cytoplasm. It localises to the endoplasmic reticulum. It is found in the golgi apparatus. Its function is as follows. ATPase required for the post-translational delivery of tail-anchored (TA) proteins to the endoplasmic reticulum. Recognizes and selectively binds the transmembrane domain of TA proteins in the cytosol. This complex then targets to the endoplasmic reticulum by membrane-bound receptors GET1 and GET2, where the tail-anchored protein is released for insertion. This process is regulated by ATP binding and hydrolysis. ATP binding drives the homodimer towards the closed dimer state, facilitating recognition of newly synthesized TA membrane proteins. ATP hydrolysis is required for insertion. Subsequently, the homodimer reverts towards the open dimer state, lowering its affinity for the GET1-GET2 receptor, and returning it to the cytosol to initiate a new round of targeting. Cooperates with the HDEL receptor ERD2 to mediate the ATP-dependent retrieval of resident ER proteins that contain a C-terminal H-D-E-L retention signal from the Golgi to the ER. Involved in low-level resistance to the oxyanions arsenite and arsenate, and in heat tolerance. This is ATPase GET3 from Candida tropicalis (strain ATCC MYA-3404 / T1) (Yeast).